We begin with the raw amino-acid sequence, 605 residues long: MAVMTDVSTTGTALRTPAAGAVKEGDVEKLRFIDEMTTNVDAVQERVLGEILGRNAGTEYLTKCGLDGATDRAAFRAKVPVVSYDDLQPYIQRIANGDRSPILSTHPVSEFLTSSGTSAGERKLMPTIMDELDRRQLLYSLLMPVMNLYVPGLDKGKGLYFLFVKSETKTPGGLTARPVLTSYYKSDHFKNRPYDPYHNYTSPTAAILCADAFQSMYAQMVCGLCQRNDVLRLGAVFASGLLRAIRFLQLNWEQLADDIESGELTPRVTDPSVREAVAAILLPDPELAKLIRAECSKGDWAGIITRVWPNTKYLDVIVTGAMAQYIPTLEFYSGGLPMACTMYASSECYFGLNLRPMCDPSEVSYTIMPNMGYFEFLPVDETGAASGDATQLVDLARVEVGREYELVITTYAGLNRYRVGDVLRVTGFHNAAPQFRFVRRKNVLLSIESDKTDEAELQRAVERASALLRPHGASVVEYTSQACTKRIPGHYVIYWELLTKGAGATVVDADTLGRCCLEMEEALNTVYRQSRVADGSIGPLEIRVVRPGTFEELMDYAISRGASINQYKVPRCVTFPPIVELLDSRVVSSHFSPALPHWTPARRSE.

AMP-binding positions include S115, 342–346 (MYASS), Y365, D421, and R440.

Belongs to the IAA-amido conjugating enzyme family. As to expression, expressed in the inner floral organs (lodicules, stamens and carpels) and at lower levels in lemmas and paleas.

Catalyzes the synthesis of indole-3-acetic acid (IAA)-amino acid conjugates, providing a mechanism for the plant to cope with the presence of excessive free auxin. Produces more IAA-Asp levels than IAA-Ala levels in vitro. May participate in the activation of disease resistance by preventing the accumulation of free IAA, which reduces the expression of a group of auxin-responsive genes encoding expansins that control cell wall loosening and expansion. Contributes to late events in stamen and carpel differentiation, and influences floret fertility. The chain is Indole-3-acetic acid-amido synthetase GH3.8 (GH3.8) from Oryza sativa subsp. indica (Rice).